Consider the following 789-residue polypeptide: Aconitate hydratase, mitochondrial (789 aa).

The N-terminal 32 residues, 1 to 32, are a transit peptide targeting the mitochondrion; sequence MFCKISRAPARMGSRIFTQSTLRSFSCAPVAA. Residues glutamine 106 and 199–201 contribute to the substrate site; that span reads DSH. The [4Fe-4S] cluster site is built by cysteine 392, cysteine 455, and cysteine 458. Substrate is bound by residues arginine 481, arginine 486, arginine 613, and 676–677; that span reads SR.

Belongs to the aconitase/IPM isomerase family. Monomer. It depends on [4Fe-4S] cluster as a cofactor.

It is found in the mitochondrion. The enzyme catalyses citrate = D-threo-isocitrate. The protein operates within carbohydrate metabolism; tricarboxylic acid cycle; isocitrate from oxaloacetate: step 2/2. Its function is as follows. Catalyzes the isomerization of citrate to isocitrate via cis-aconitate, a step in the citric acid cycle. The polypeptide is Aconitate hydratase, mitochondrial (Schizosaccharomyces pombe (strain 972 / ATCC 24843) (Fission yeast)).